Reading from the N-terminus, the 413-residue chain is Chloramphenicol resistance protein CraA (413 aa).

A run of 12 helical transmembrane segments spans residues 18–38 (LMFP…NDLI), 55–75 (WAPS…WLLG), 84–104 (KKVL…ILLT), 110–130 (FLTL…VGYA), 147–167 (LMAN…AFLI), 170–190 (VSWH…WVGL), 228–248 (ALPL…IILV), 260–280 (LAQF…IKII), 289–309 (VLIG…GVVW), 312–332 (YLIP…GISF), 349–369 (TVAA…IELV), and 373–393 (YTQF…ALWF).

Belongs to the major facilitator superfamily.

The protein localises to the cell inner membrane. Efflux pump that mediates resistance to chloramphenicol. This chain is Chloramphenicol resistance protein CraA, found in Acinetobacter baumannii (strain ATCC 19606 / DSM 30007 / JCM 6841 / CCUG 19606 / CIP 70.34 / NBRC 109757 / NCIMB 12457 / NCTC 12156 / 81).